We begin with the raw amino-acid sequence, 298 residues long: N-acetylmuramic acid 6-phosphate etherase (298 aa).

The SIS domain occupies 55–218; sequence IHAQVSGGGR…STGLMIKSGK (164 aa). The active-site Proton donor is E83. E114 is an active-site residue.

Belongs to the GCKR-like family. MurNAc-6-P etherase subfamily. In terms of assembly, homodimer.

It carries out the reaction N-acetyl-D-muramate 6-phosphate + H2O = N-acetyl-D-glucosamine 6-phosphate + (R)-lactate. Its pathway is amino-sugar metabolism; 1,6-anhydro-N-acetylmuramate degradation. The protein operates within amino-sugar metabolism; N-acetylmuramate degradation. It functions in the pathway cell wall biogenesis; peptidoglycan recycling. In terms of biological role, specifically catalyzes the cleavage of the D-lactyl ether substituent of MurNAc 6-phosphate, producing GlcNAc 6-phosphate and D-lactate. Together with AnmK, is also required for the utilization of anhydro-N-acetylmuramic acid (anhMurNAc) either imported from the medium or derived from its own cell wall murein, and thus plays a role in cell wall recycling. This Shigella sonnei (strain Ss046) protein is N-acetylmuramic acid 6-phosphate etherase.